A 286-amino-acid polypeptide reads, in one-letter code: L-ribulose 3-epimerase (286 aa).

D-allulose-binding residues include His12, Ser69, Glu152, and Glu158. D-fructose contacts are provided by His12, Ser69, Glu152, and Glu158. The active-site Proton donor/acceptor is Glu152. Glu152 contributes to the Mn(2+) binding site. Residue Asp185 coordinates Mn(2+). D-allulose-binding residues include His188, His211, Arg217, and Glu246. The D-fructose site is built by His188, His211, Arg217, and Glu246. A Mn(2+)-binding site is contributed by His211. The active-site Proton donor/acceptor is the Glu246. Position 246 (Glu246) interacts with Mn(2+).

The protein belongs to the hyi family. As to quaternary structure, homodimer. The cofactor is Mn(2+).

It carries out the reaction L-ribulose = L-xylulose. The enzyme catalyses D-ribulose = D-xylulose. It catalyses the reaction D-allulose = keto-D-fructose. The catalysed reaction is keto-L-tagatose = keto-L-sorbose. It carries out the reaction keto-D-tagatose = keto-D-sorbose. Catalyzes the epimerization of various ketoses at the C(3) position. Exhibits the highest enzymatic activity toward L-ribulose, followed by D-ribulose, D-allulose and D-fructose. Shows lower activity with L-xylulose, L-tagatose, D-xylulose, D-tagatose, L-sorbose, D-sorbose, and weak activity with L-allulose and L-fructose. This chain is L-ribulose 3-epimerase, found in Methylomonas sp. (strain DH-1).